The primary structure comprises 358 residues: tRNA-specific 2-thiouridylase MnmA (358 aa).

Residues 10–17 and Met-36 each bind ATP; that span reads AMSGGVDS. Cys-105 serves as the catalytic Nucleophile. Cys-105 and Cys-202 form a disulfide bridge. Position 129 (Gly-129) interacts with ATP. The interval 152–154 is interaction with tRNA; that stretch reads KDQ. Catalysis depends on Cys-202, which acts as the Cysteine persulfide intermediate. The tract at residues 308-309 is interaction with tRNA; sequence RY.

Belongs to the MnmA/TRMU family.

Its subcellular location is the cytoplasm. The catalysed reaction is S-sulfanyl-L-cysteinyl-[protein] + uridine(34) in tRNA + AH2 + ATP = 2-thiouridine(34) in tRNA + L-cysteinyl-[protein] + A + AMP + diphosphate + H(+). Catalyzes the 2-thiolation of uridine at the wobble position (U34) of tRNA, leading to the formation of s(2)U34. This chain is tRNA-specific 2-thiouridylase MnmA, found in Magnetococcus marinus (strain ATCC BAA-1437 / JCM 17883 / MC-1).